A 272-amino-acid polypeptide reads, in one-letter code: NAD kinase (272 aa).

Catalysis depends on Asp50, which acts as the Proton acceptor. NAD(+)-binding positions include 50 to 51, 126 to 127, Arg152, Asp154, 165 to 170, and Ala189; these read DG, NE, and TAYNKS.

This sequence belongs to the NAD kinase family. A divalent metal cation is required as a cofactor.

The protein localises to the cytoplasm. It carries out the reaction NAD(+) + ATP = ADP + NADP(+) + H(+). In terms of biological role, involved in the regulation of the intracellular balance of NAD and NADP, and is a key enzyme in the biosynthesis of NADP. Catalyzes specifically the phosphorylation on 2'-hydroxyl of the adenosine moiety of NAD to yield NADP. This Streptococcus pneumoniae (strain Hungary19A-6) protein is NAD kinase.